The sequence spans 197 residues: Phospholipid hydroperoxide glutathione peroxidase (197 aa).

S40 is subject to Phosphoserine. U73 is an active-site residue. U73 is a non-standard amino acid (selenocysteine).

Belongs to the glutathione peroxidase family. As to quaternary structure, monomer. Has a tendency to form higher mass oligomers. Interacts with FUNDC1; this interaction promotes GPX4 recruitment into mitochondria through TOM/TIM complex where it is degraded by mitophagy.

Its subcellular location is the mitochondrion. It localises to the cytoplasm. The enzyme catalyses a hydroperoxy polyunsaturated fatty acid + 2 glutathione = a hydroxy polyunsaturated fatty acid + glutathione disulfide + H2O. It carries out the reaction 2 glutathione + H2O2 = glutathione disulfide + 2 H2O. The catalysed reaction is tert-butyl hydroperoxide + 2 glutathione = tert-butanol + glutathione disulfide + H2O. It catalyses the reaction cumene hydroperoxide + 2 glutathione = 2-phenylpropan-2-ol + glutathione disulfide + H2O. The enzyme catalyses (9S)-hydroperoxy-(10E,12Z)-octadecadienoate + 2 glutathione = (9S)-hydroxy-(10E,12Z)-octadecadienoate + glutathione disulfide + H2O. It carries out the reaction (13S)-hydroperoxy-(9Z,11E)-octadecadienoate + 2 glutathione = (13S)-hydroxy-(9Z,11E)-octadecadienoate + glutathione disulfide + H2O. The catalysed reaction is (5S)-hydroperoxy-(6E,8Z,11Z,14Z)-eicosatetraenoate + 2 glutathione = (5S)-hydroxy-(6E,8Z,11Z,14Z)-eicosatetraenoate + glutathione disulfide + H2O. It catalyses the reaction (12R)-hydroperoxy-(5Z,8Z,10E,14Z)-eicosatetraenoate + 2 glutathione = (12R)-hydroxy-(5Z,8Z,10E,14Z)-eicosatetraenoate + glutathione disulfide + H2O. The enzyme catalyses (12S)-hydroperoxy-(5Z,8Z,10E,14Z)-eicosatetraenoate + 2 glutathione = (12S)-hydroxy-(5Z,8Z,10E,14Z)-eicosatetraenoate + glutathione disulfide + H2O. It carries out the reaction (15S)-hydroperoxy-(5Z,8Z,11Z,13E)-eicosatetraenoate + 2 glutathione = (15S)-hydroxy-(5Z,8Z,11Z,13E)-eicosatetraenoate + glutathione disulfide + H2O. The catalysed reaction is (5S)-hydroperoxy-(6E,8Z,11Z,14Z,17Z)-eicosapentaenoate + 2 glutathione = (5S)-hydroxy-(6E,8Z,11Z,14Z,17Z)-eicosapentaenoate + glutathione disulfide + H2O. It catalyses the reaction (12S)-hydroperoxy-(5Z,8Z,10E,14Z,17Z)-eicosapentaenoate + 2 glutathione = (12S)-hydroxy-(5Z,8Z,10E,14Z,17Z)-eicosapentaenoate + glutathione disulfide + H2O. The enzyme catalyses (15S)-hydroperoxy-(5Z,8Z,11Z,13E,17Z)-eicosapentaenoate + 2 glutathione = (15S)-hydroxy-(5Z,8Z,11Z,13E,17Z)-eicosapentaenoate + glutathione disulfide + H2O. It carries out the reaction (15S)-hydroperoxy-(11Z,13E)-eicosadienoate + 2 glutathione = (15S)-hydroxy-(11Z,13E)-eicosadienoate + glutathione disulfide + H2O. The catalysed reaction is (17S)-hydroperoxy-(4Z,7Z,10Z,13Z,15E,19Z)-docosahexaenoate + 2 glutathione = (17S)-hydroxy-(4Z,7Z,10Z,13Z,15E,19Z)-docosahexaenoate + glutathione disulfide + H2O. It catalyses the reaction a hydroperoxy-1,2-diacyl-glycero-3-phosphocholine + 2 glutathione = a hydroxy-1,2-diacyl-glycero-3-phosphocholine + glutathione disulfide + H2O. Its function is as follows. Essential antioxidant peroxidase that directly reduces phospholipid hydroperoxide even if they are incorporated in membranes and lipoproteins. Can also reduce fatty acid hydroperoxide, cholesterol hydroperoxide and thymine hydroperoxide. Plays a key role in protecting cells from oxidative damage by preventing membrane lipid peroxidation. Required to prevent cells from ferroptosis, a non-apoptotic cell death resulting from an iron-dependent accumulation of lipid reactive oxygen species. The presence of selenocysteine (Sec) versus Cys at the active site is essential for life: it provides resistance to overoxidation and prevents cells against ferroptosis. The presence of Sec at the active site is also essential for the survival of a specific type of parvalbumin-positive interneurons, thereby preventing against fatal epileptic seizures. May be required to protect cells from the toxicity of ingested lipid hydroperoxides. Required for normal sperm development and male fertility. Essential for maturation and survival of photoreceptor cells. Plays a role in a primary T-cell response to viral and parasitic infection by protecting T-cells from ferroptosis and by supporting T-cell expansion. Plays a role of glutathione peroxidase in platelets in the arachidonic acid metabolism. Reduces hydroperoxy ester lipids formed by a 15-lipoxygenase that may play a role as down-regulator of the cellular 15-lipoxygenase pathway. Can also reduce small soluble hydroperoxides such as H2O2, cumene hydroperoxide and tert-butyl hydroperoxide. The polypeptide is Phospholipid hydroperoxide glutathione peroxidase (Hylobates lar (Lar gibbon)).